Reading from the N-terminus, the 403-residue chain is 1-deoxy-D-xylulose 5-phosphate reductoisomerase (403 aa).

6 residues coordinate NADPH: Thr-18, Gly-19, Ser-20, Ile-21, Gln-46, and Asn-132. Position 133 (Lys-133) interacts with 1-deoxy-D-xylulose 5-phosphate. Glu-134 contributes to the NADPH binding site. Asp-158 is a Mn(2+) binding site. The 1-deoxy-D-xylulose 5-phosphate site is built by Ser-159, Glu-160, Ser-189, and His-212. Position 160 (Glu-160) interacts with Mn(2+). NADPH is bound at residue Gly-218. 4 residues coordinate 1-deoxy-D-xylulose 5-phosphate: Ser-225, Asn-230, Lys-231, and Glu-234. Position 234 (Glu-234) interacts with Mn(2+).

The protein belongs to the DXR family. It depends on Mg(2+) as a cofactor. Mn(2+) is required as a cofactor.

The enzyme catalyses 2-C-methyl-D-erythritol 4-phosphate + NADP(+) = 1-deoxy-D-xylulose 5-phosphate + NADPH + H(+). Its pathway is isoprenoid biosynthesis; isopentenyl diphosphate biosynthesis via DXP pathway; isopentenyl diphosphate from 1-deoxy-D-xylulose 5-phosphate: step 1/6. Its function is as follows. Catalyzes the NADPH-dependent rearrangement and reduction of 1-deoxy-D-xylulose-5-phosphate (DXP) to 2-C-methyl-D-erythritol 4-phosphate (MEP). The polypeptide is 1-deoxy-D-xylulose 5-phosphate reductoisomerase (Aromatoleum aromaticum (strain DSM 19018 / LMG 30748 / EbN1) (Azoarcus sp. (strain EbN1))).